Consider the following 362-residue polypeptide: Microfibril-associated glycoprotein 3 (362 aa).

The first 18 residues, 1 to 18, serve as a signal peptide directing secretion; sequence MKLHCCLFTLVASIIVPA. Residues 19 to 147 lie on the Extracellular side of the membrane; that stretch reads AFVLEDVDFD…LRVIFTSGDM (129 aa). 3 N-linked (GlcNAc...) asparagine glycosylation sites follow: Asn-36, Asn-41, and Asn-110. Residues 45–137 enclose the Ig-like C2-type domain; it reads PSSFELSASS…SPIRASYSVT (93 aa). Cys-73 and Cys-124 are joined by a disulfide. A helical transmembrane segment spans residues 148-170; the sequence is SVYYMIVCLIAFTITLILNVTRL. Over 171–362 the chain is Cytoplasmic; the sequence is CMMSSHLRKT…KDGAYENCQL (192 aa). Disordered regions lie at residues 285-306 and 323-350; these read VINP…GSLN and ETKS…ESNC. A compositionally biased stretch (polar residues) spans 323-337; that stretch reads ETKSIDTESQGSSHF.

Post-translationally, glycosylated.

It localises to the cell membrane. Functionally, component of the elastin-associated microfibrils. The protein is Microfibril-associated glycoprotein 3 (MFAP3) of Homo sapiens (Human).